Here is a 181-residue protein sequence, read N- to C-terminus: MILVVGLGNIGVEYENTRHNVGFMLIDLLLKESNFTNLTNSKFKGELFKIGSSLLLLKPSTYMNNSGLSVKAVNDFYKCERMIVIHDDIDINLGALRFKKGGSSGGHNGLKSIDTLCGNDYERVRIGVGKGENVISHVLGKFKSEEEITLSKVLEHTKKALLELIENDDLSAISSKYSLKA.

Y14 is a tRNA binding site. H19 acts as the Proton acceptor in catalysis. Residues Y62, N64, and N108 each coordinate tRNA.

Belongs to the PTH family. In terms of assembly, monomer.

Its subcellular location is the cytoplasm. The catalysed reaction is an N-acyl-L-alpha-aminoacyl-tRNA + H2O = an N-acyl-L-amino acid + a tRNA + H(+). In terms of biological role, hydrolyzes ribosome-free peptidyl-tRNAs (with 1 or more amino acids incorporated), which drop off the ribosome during protein synthesis, or as a result of ribosome stalling. Catalyzes the release of premature peptidyl moieties from peptidyl-tRNA molecules trapped in stalled 50S ribosomal subunits, and thus maintains levels of free tRNAs and 50S ribosomes. The sequence is that of Peptidyl-tRNA hydrolase from Campylobacter jejuni subsp. jejuni serotype O:23/36 (strain 81-176).